We begin with the raw amino-acid sequence, 172 residues long: 3-phenylpropionate/cinnamic acid dioxygenase subunit beta (172 aa).

Belongs to the bacterial ring-hydroxylating dioxygenase beta subunit family. In terms of assembly, this dioxygenase system consists of four proteins: the two subunits of the hydroxylase component (HcaE and HcaF), a ferredoxin (HcaC) and a ferredoxin reductase (HcaD).

It carries out the reaction 3-phenylpropanoate + NADH + O2 + H(+) = 3-(cis-5,6-dihydroxycyclohexa-1,3-dien-1-yl)propanoate + NAD(+). The catalysed reaction is (E)-cinnamate + NADH + O2 + H(+) = (2E)-3-(cis-5,6-dihydroxycyclohexa-1,3-dien-1-yl)prop-2-enoate + NAD(+). It functions in the pathway aromatic compound metabolism; 3-phenylpropanoate degradation. Its function is as follows. Part of the multicomponent 3-phenylpropionate dioxygenase. Converts 3-phenylpropionic acid (PP) and cinnamic acid (CI) into 3-phenylpropionate-dihydrodiol (PP-dihydrodiol) and cinnamic acid-dihydrodiol (CI-dihydrodiol), respectively. The chain is 3-phenylpropionate/cinnamic acid dioxygenase subunit beta from Escherichia coli O17:K52:H18 (strain UMN026 / ExPEC).